The primary structure comprises 121 residues: Protein SNORC (121 aa).

The first 24 residues, 1–24 (MASCLALRVALLLISGVLAPAVLT), serve as a signal peptide directing secretion. At 25 to 92 (AEGPQEPDPT…QDGGSLGPGA (68 aa)) the chain is on the extracellular side. The disordered stretch occupies residues 26-84 (EGPQEPDPTLWNEPIELPSGEGPLESTSHNQEFAVSGPPFPTSAPAPEDSTPPARVDQD). A helical transmembrane segment spans residues 93–113 (IAAIVIAALLATCVVLALVVV). Over 114 to 121 (ALRKFSAS) the chain is Cytoplasmic.

Interacts (via the extracellular domain) with FGF2. Expressed only in cartilage, including nasal, knee epiphyseal and rib tissues. In proliferation and hypertrophic chondrocytes, detected intracellulary and in the pericellular extracellular matrix. In primary spongiosa, detected only in the extracellular matrix.

It is found in the membrane. The protein localises to the cytoplasm. It localises to the secreted. Its subcellular location is the extracellular space. The protein resides in the extracellular matrix. Plays a role in the regulation of chondrocyte maturation and postnatal endochondral ossification. May inhibit cell growth stimulation induced by FGF2. This is Protein SNORC from Mus musculus (Mouse).